The chain runs to 366 residues: Transcription factor IIIA (366 aa).

9 consecutive C2H2-type zinc fingers follow at residues 35 to 59, 65 to 89, 95 to 120, 127 to 151, 157 to 181, 184 to 210, 214 to 236, 243 to 268, and 274 to 298; these read YICS…LCKH, FPCK…SLTH, FTCD…NRFH, YVCH…QFSH, YECP…EKVH, YPCK…AECH, AVCD…QKTH, YLCP…QSFH, and FVCE…SVVH. Phosphoserine; by CK2 is present on serine 38. The segment covering 299-310 has biased composition (basic and acidic residues); the sequence is DPEKRKLKEKCP. A disordered region spans residues 299-366; it reads DPEKRKLKEK…SLVLDKLTIQ (68 aa). Residue serine 336 is modified to Phosphoserine; by CK2; in vitro.

Post-translationally, the N-terminus is blocked. As to expression, synthesized in oocytes and, in much lower levels, in somatic cells.

It is found in the nucleus. In terms of biological role, involved in ribosomal large subunit biogenesis. Acts both as a positive transcription factor for 5S RNA genes, and as a specific RNA binding protein that complexes with 5S RNA in oocytes to form the 7S ribonucleoprotein storage particle. May play an essential role in the developmental change in 5S RNA gene expression. Interacts with the internal control region (ICR) of approximately 50 bases within the 5S RNA genes, is required for correct transcription of these genes by RNA polymerase III. Also binds the transcribed 5S RNA's. This Xenopus laevis (African clawed frog) protein is Transcription factor IIIA (gtf3a).